An 89-amino-acid polypeptide reads, in one-letter code: Arminin 7519 (89 aa).

The signal sequence occupies residues 1–18; the sequence is MRSTFAVLFLALIALTYS. A propeptide spanning residues 19–59 is cleaved from the precursor; that stretch reads KNYQDVKEEIKNEVENEILRDLGEDDDELDDNAQEAVNDAR. An Alanine amide modification is found at Ala86.

This sequence belongs to the arminin family. As to expression, expressed in entodermal epithelium along the body column.

Its subcellular location is the secreted. The protein resides in the target cell membrane. In terms of biological role, antimicrobial peptide with a broad-spectrum antimicrobial activity. Keeps its antibacterial activity under a wide range of salt concentrations that mimic physiological conditions of human blood, which is surprising, since Hydra is an obligate freshwater animal with nearly no salt tolerance. Does not affect red blood cells. The chain is Arminin 7519 from Hydra vulgaris (Hydra).